An 88-amino-acid chain; its full sequence is Mitochondrial import inner membrane translocase subunit Tim10 (88 aa).

The Twin CX3C motif signature appears at 25 to 49 (CSAKCISKYNEGDLNVGESVCAERC). Disulfide bonds link Cys25-Cys49 and Cys29-Cys45. The interval 63–88 (KMSGTQPGQEVPQEAPAAAPEKKGWF) is disordered. Low complexity predominate over residues 68-81 (QPGQEVPQEAPAAA).

The protein belongs to the small Tim family. As to quaternary structure, heterohexamer; composed of 3 copies of timm9 and 3 copies of timm10, named soluble 70 kDa complex. Associates directly with the TIM22 complex, whose core is composed of timm22. Interacts with the transmembrane regions of multi-pass transmembrane proteins in transit.

The protein localises to the mitochondrion inner membrane. Its function is as follows. Component of the TIM22 complex, a complex that mediates the import and insertion of multi-pass transmembrane proteins into the mitochondrial inner membrane. The TIM22 complex forms a twin-pore translocase that uses the membrane potential as external driving force. This chain is Mitochondrial import inner membrane translocase subunit Tim10 (timm10), found in Dictyostelium discoideum (Social amoeba).